Reading from the N-terminus, the 901-residue chain is Vacuolar protein sorting-associated protein 41 homolog (901 aa).

A disordered region spans residues 1-37 (MDETHENEASDSFDPVFENSYHDDVTFNTEDDDEPPL). Residues 618 to 760 (LRLLLDNADS…VAEFPAHFSQ (143 aa)) form a CHCR repeat. The RING-type; atypical zinc-finger motif lies at 839-893 (CSLCAQIIINSNQETTKKFSDIKVFKCGHIFHLACSTSEMERRQSIEEGLCIACS).

The protein belongs to the VPS41 family. In terms of assembly, probable component of the homotypic fusion and vacuole protein sorting (HOPS) complex consisting of the core class C Vps proteins vps-11, vps-16, vps-18, and which further associates with vps-33.1, vps-39 and vps-41.

It localises to the endosome membrane. The protein resides in the late endosome membrane. Its subcellular location is the early endosome membrane. The protein localises to the lysosome membrane. It is found in the golgi apparatus. It localises to the trans-Golgi network. The protein resides in the cytoplasmic vesicle. Its subcellular location is the clathrin-coated vesicle. The protein localises to the cytoplasm. It is found in the cytosol. Its function is as follows. Plays a role in vesicle-mediated protein trafficking to lysosomal compartments including the endocytic membrane transport pathways. Believed to act in part as a core component of the putative HOPS endosomal tethering complex which is proposed to be involved in the rab-5-to-rab-7 endosome conversion probably implicating sand-1, and via binding SNAREs and SNARE complexes to mediate tethering and docking events during SNARE-mediated membrane fusion. The HOPS complex is proposed to be recruited to rab-7 on the late endosomal membrane and to regulate late endocytic, phagocytic and autophagic traffic towards lysosomes. Within the HOPS complex, contributes to the normal development of gut granules in the adult intestine. May mediate the tethering of autophagosomes with lysosomes. Has a role in the negative regulation of apoptosis. Required for uptake of exogenous dsRNA which is used in experimental RNA silencing. In Caenorhabditis elegans, this protein is Vacuolar protein sorting-associated protein 41 homolog.